The chain runs to 334 residues: Galactosylgalactosylxylosylprotein 3-beta-glucuronosyltransferase 1 (334 aa).

The Cytoplasmic segment spans residues 1-6; that stretch reads MPKRRD. Residues 3-5 are essential for transport from endoplasmic reticulum to Golgi apparatus and interaction with SAR1A; it reads KRR. A helical; Signal-anchor for type II membrane protein transmembrane segment spans residues 7–27; the sequence is ILAIVLIVLPWTLLITVWHQS. The Lumenal portion of the chain corresponds to 28–334; it reads SLAPLLAVHK…KGFTDPSVEI (307 aa). Position 91–93 (91–93) interacts with UDP-alpha-D-glucuronate; that stretch reads PTY. Residues T103 and T108 each carry the phosphothreonine modification. UDP-alpha-D-glucuronate is bound at residue D122. Residue N140 is glycosylated (N-linked (GlcNAc...) asparagine). UDP-alpha-D-glucuronate is bound by residues R165 and R170. N184 carries an N-linked (GlcNAc...) asparagine glycan. Residue 195–197 participates in UDP-alpha-D-glucuronate binding; the sequence is DDD. D197 is a Mn(2+) binding site. The interaction with galactose moiety of substrate glycoprotein stretch occupies residues 245–254; that stretch reads FDPHRPFAID. The active-site Proton donor/acceptor is the E284. N303 carries an N-linked (GlcNAc...) asparagine glycan. 311 to 313 is a UDP-alpha-D-glucuronate binding site; the sequence is HTR.

The protein belongs to the glycosyltransferase 43 family. Homodimer. Interacts with SAR1A. Mn(2+) is required as a cofactor. Post-translationally, the soluble form derives from the membrane form by proteolytic processing.

The protein localises to the golgi apparatus membrane. Its subcellular location is the secreted. It is found in the endoplasmic reticulum membrane. It carries out the reaction 3-O-(beta-D-galactosyl-(1-&gt;3)-beta-D-galactosyl-(1-&gt;4)-beta-D-xylosyl)-L-seryl-[protein] + UDP-alpha-D-glucuronate = 3-O-(beta-D-GlcA-(1-&gt;3)-beta-D-Gal-(1-&gt;3)-beta-D-Gal-(1-&gt;4)-beta-D-Xyl)-L-seryl-[protein] + UDP + H(+). It functions in the pathway protein modification; protein glycosylation. Involved in the biosynthesis of L2/HNK-1 carbohydrate epitope on glycoproteins. Can also play a role in glycosaminoglycan biosynthesis. Substrates include asialo-orosomucoid (ASOR), asialo-fetuin, and asialo-neural cell adhesion molecule. Requires sphingomyelin for activity: stearoyl-sphingomyelin was the most effective, followed by palmitoyl-sphingomyelin and lignoceroyl-sphingomyelin. Activity was demonstrated only for sphingomyelin with a saturated fatty acid and not for that with an unsaturated fatty acid, regardless of the length of the acyl group. The chain is Galactosylgalactosylxylosylprotein 3-beta-glucuronosyltransferase 1 from Mus musculus (Mouse).